Consider the following 212-residue polypeptide: Translation initiation factor IF-3 (212 aa).

The span at L190–S203 shows a compositional bias: basic and acidic residues. The interval L190 to Q212 is disordered.

It belongs to the IF-3 family. As to quaternary structure, monomer.

It is found in the cytoplasm. Functionally, IF-3 binds to the 30S ribosomal subunit and shifts the equilibrium between 70S ribosomes and their 50S and 30S subunits in favor of the free subunits, thus enhancing the availability of 30S subunits on which protein synthesis initiation begins. This is Translation initiation factor IF-3 from Mycoplasmopsis fermentans (Mycoplasma fermentans).